The chain runs to 968 residues: RNA polymerase-associated protein RapA (968 aa).

Residues 163-332 (EVGQRFAPRV…FARLRLLDPD (170 aa)) enclose the Helicase ATP-binding domain. 176–183 (DEVGLGKT) contacts ATP. The DEAH box motif lies at 278-281 (DEAH). A Helicase C-terminal domain is found at 491 to 678 (RVDWLIDFLK…GTKARYQELK (188 aa)).

This sequence belongs to the SNF2/RAD54 helicase family. RapA subfamily. In terms of assembly, interacts with the RNAP. Has a higher affinity for the core RNAP than for the holoenzyme. Its ATPase activity is stimulated by binding to RNAP.

In terms of biological role, transcription regulator that activates transcription by stimulating RNA polymerase (RNAP) recycling in case of stress conditions such as supercoiled DNA or high salt concentrations. Probably acts by releasing the RNAP, when it is trapped or immobilized on tightly supercoiled DNA. Does not activate transcription on linear DNA. Probably not involved in DNA repair. This is RNA polymerase-associated protein RapA from Shewanella pealeana (strain ATCC 700345 / ANG-SQ1).